Here is a 691-residue protein sequence, read N- to C-terminus: Elongation factor G (691 aa).

Positions 8–282 constitute a tr-type G domain; that stretch reads ERVRNIGIAA…AVVNYLPAPV (275 aa). GTP is bound by residues 17 to 24, 81 to 85, and 135 to 138; these read AHIDAGKT, DTPGH, and NKMD.

This sequence belongs to the TRAFAC class translation factor GTPase superfamily. Classic translation factor GTPase family. EF-G/EF-2 subfamily.

The protein localises to the cytoplasm. Functionally, catalyzes the GTP-dependent ribosomal translocation step during translation elongation. During this step, the ribosome changes from the pre-translocational (PRE) to the post-translocational (POST) state as the newly formed A-site-bound peptidyl-tRNA and P-site-bound deacylated tRNA move to the P and E sites, respectively. Catalyzes the coordinated movement of the two tRNA molecules, the mRNA and conformational changes in the ribosome. This is Elongation factor G from Prochlorococcus marinus (strain NATL2A).